The chain runs to 979 residues: Protocadherin alpha-9 (979 aa).

Positions 1–59 are cleaved as a signal peptide; that stretch reads MRLGNRPEDIRTCVHLRWHIHGLLRQENASVVISKCLRHGAWRLLLWLLLLATWDVGSG. Over 60–726 the chain is Extracellular; the sequence is QLHYSVPEEA…RREASLMDVN (667 aa). Cadherin domains lie at 64–163, 164–272, 273–380, 381–485, 486–595, and 611–707; these read SVPE…PPIF, SVAE…APVF, DRSV…APEI, VLTS…APAF, AHPE…PPTL, and VSRS…VPKA. Residues Asn-287 and Asn-295 are each glycosylated (N-linked (GlcNAc...) asparagine). Asn-578 carries N-linked (GlcNAc...) asparagine glycosylation. A helical membrane pass occupies residues 727–747; that stretch reads VYLIIAICAVSSLLVLTLLLY. Topologically, residues 748 to 979 are cytoplasmic; the sequence is TALRCSAVPM…GNSTTDNSDQ (232 aa). PXXP repeat units lie at residues 763–766, 828–831, 861–864, 902–905, and 920–923; these read LGKP, PRQP, PGGP, PGNP, and PGSP. The segment at 763–923 is 5 X 4 AA repeats of P-X-X-P; sequence LGKPTLVCSS…PDKFIIPGSP (161 aa). A disordered region spans residues 859 to 979; sequence AGPGGPDQQW…GNSTTDNSDQ (121 aa). Residues 938-952 are compositionally biased toward basic and acidic residues; sequence DKSDFITFGKKEETK.

The protein resides in the cell membrane. In terms of biological role, potential calcium-dependent cell-adhesion protein. May be involved in the establishment and maintenance of specific neuronal connections in the brain. The sequence is that of Protocadherin alpha-9 from Mus musculus (Mouse).